The primary structure comprises 419 residues: Protein distal antenna-related (419 aa).

The HTH psq-type domain maps to threonine 15 to leucine 66. Residues lysine 42 to asparagine 62 constitute a DNA-binding region (H-T-H motif). Disordered regions lie at residues glutamine 333–glutamate 359 and glutamate 378–glutamine 419.

Interacts with itself, dan, ey and dac to form a complex (or complexes) containing the RD factors. As to expression, coexpressed with dan in the presumptive distal antenna, but not in the leg imaginal disk. Both proteins are also expressed in the brain and the eye region of the eye-antenna disk. First detected in early L3 eye disks in cells surrounding the newly initiated morphogenetic furrow. Highly expressed in evenly spaced clusters of cells anterior to the furrow, lower levels within and posterior to the furrow.

It localises to the nucleus. Its function is as follows. Probable transcription factor with a role in the retinal determination (RD) network. Regulates ato expression and is required for normal R8 induction and differentiation. Danr appears to repress Dan expression, but Dan is required for Danr expression anterior to the morphogenetic furrow (MF). Dan and Danr lie downstream of so and require dac function for highest levels of expression. Contributes to differentiation of antenna-specific characteristics; effector gene that acts downstream of homothorax (hth), Distal-less (Dll), cut (ct) and spineless (ss) genes to control differentiation of distal antennal structures. The protein is Protein distal antenna-related of Drosophila melanogaster (Fruit fly).